The following is a 185-amino-acid chain: Transcription factor E (185 aa).

In terms of domain architecture, HTH TFE/IIEalpha-type spans 5 to 88 (KNKELLEIAQ…YWRLETKKLP (84 aa)).

It belongs to the TFE family. As to quaternary structure, monomer. Interaction with RNA polymerase subunits RpoF and RpoE is necessary for Tfe stimulatory transcription activity. Able to interact with Tbp and RNA polymerase in the absence of DNA promoter. Interacts both with the preinitiation and elongation complexes.

Functionally, transcription factor that plays a role in the activation of archaeal genes transcribed by RNA polymerase. Facilitates transcription initiation by enhancing TATA-box recognition by TATA-box-binding protein (Tbp), and transcription factor B (Tfb) and RNA polymerase recruitment. Not absolutely required for transcription in vitro, but particularly important in cases where Tbp or Tfb function is not optimal. It dynamically alters the nucleic acid-binding properties of RNA polymerases by stabilizing the initiation complex and destabilizing elongation complexes. Seems to translocate with the RNA polymerase following initiation and acts by binding to the non template strand of the transcription bubble in elongation complexes. This Thermococcus kodakarensis (strain ATCC BAA-918 / JCM 12380 / KOD1) (Pyrococcus kodakaraensis (strain KOD1)) protein is Transcription factor E.